A 149-amino-acid chain; its full sequence is Oligosaccharyltransferase complex subunit ostc (149 aa).

At methionine 1 to threonine 32 the chain is on the cytoplasmic side. Residues valine 33 to isoleucine 53 form a helical membrane-spanning segment. The Extracellular segment spans residues valine 54–tyrosine 83. A helical membrane pass occupies residues isoleucine 84–leucine 104. The Cytoplasmic segment spans residues aspartate 105–arginine 117. Residues phenylalanine 118 to phenylalanine 138 traverse the membrane as a helical segment. Topologically, residues methionine 139–glycine 149 are extracellular.

This sequence belongs to the OSTC family. In terms of assembly, specific component of the STT3A-containing form of the oligosaccharyltransferase (OST) complex.

The protein resides in the membrane. It functions in the pathway protein modification; protein glycosylation. In terms of biological role, specific component of the STT3A-containing form of the oligosaccharyl transferase (OST) complex that catalyzes the initial transfer of a defined glycan (Glc(3)Man(9)GlcNAc(2) in eukaryotes) from the lipid carrier dolichol-pyrophosphate to an asparagine residue within an Asn-X-Ser/Thr consensus motif in nascent polypeptide chains, the first step in protein N-glycosylation. N-glycosylation occurs cotranslationally and the complex associates with the Sec61 complex at the channel-forming translocon complex that mediates protein translocation across the endoplasmic reticulum (ER). All subunits are required for a maximal enzyme activity. The polypeptide is Oligosaccharyltransferase complex subunit ostc (Danio rerio (Zebrafish)).